The sequence spans 195 residues: Large ribosomal subunit protein uL5 (195 aa).

Residues Met-1 to Asn-25 form a disordered region.

It belongs to the universal ribosomal protein uL5 family. Component of the large ribosomal subunit.

It localises to the nucleus. The protein localises to the cytoplasm. In terms of biological role, component of the ribosome, a large ribonucleoprotein complex responsible for the synthesis of proteins in the cell. The small ribosomal subunit (SSU) binds messenger RNAs (mRNAs) and translates the encoded message by selecting cognate aminoacyl-transfer RNA (tRNA) molecules. The large subunit (LSU) contains the ribosomal catalytic site termed the peptidyl transferase center (PTC), which catalyzes the formation of peptide bonds, thereby polymerizing the amino acids delivered by tRNAs into a polypeptide chain. The nascent polypeptides leave the ribosome through a tunnel in the LSU and interact with protein factors that function in enzymatic processing, targeting, and the membrane insertion of nascent chains at the exit of the ribosomal tunnel. This chain is Large ribosomal subunit protein uL5 (RpL11), found in Spodoptera frugiperda (Fall armyworm).